Reading from the N-terminus, the 912-residue chain is SVEPRQPFGRLDAPATAPTARAPGSNGIRRRADSPVRGCGFPSLISPPRKGPVAEEDEEDDDEDDEGHEDWREAYGSHLQLEVEPSTRDPRDEGTADAWIERNPSLIRLTGKHPLNCEPPLARLMHHGFITPAPLHYVRNHGAVPRGDWATWTVEVTGLVRRPARLTMDELANGFPAAEVPATLVCAGNRRKEQNMVQQTVGFNWGAAGVSTSVWRGARLRDVLLRCGVMSKKGQALNVCFEGAEDLPGGGGSKYGTSMSREWAMDPSRDIILPYAQNGEPLLPDHGYPVRVLIPGCIGGRMVKWVRRIVVTTAESDNYYHFKDNRVLPSHVDAELANAEAWWYRPEYIINELNTNSVITTPGHDEILPINAFTTQRAYTIKGYAYSGGGKKITRVEVTLDGGESWMLCTLDIPEKPNKYGRYWCWCFWSVEIEVLDLLGAKEVAVRAWDQTHNTQPEKLIWNLMGMMNNCWFKIKVNVCRPHKGEIGLVFEHPTQPGNQTGGWMARQKHLETAEAAAPGLKRSTSTPFMNTAGDKQFTMSEVRKHGSKESAWIVVHGHVYDCTAFLKDHPGGADSILINAGSDCTEEFDAIHSDKAKALLDTYRIGELITTGTGYNSDNSVHGGSSLSHLAPIREATKVAGAPIALSSPREKVPCRLVDKKELSHDVRLFRFALPSSDQVLGLPVGKHIFVCATIDGKLCMRAYTPTSMVDEIGQFELLVKVYFRDEHPKFPNGGLMTQYLESLQVGSSSIDVKGPLGHVEYTGRGNFVINGKQRRARRLAMICGSSGITPMYQVIQAVLRDQPEDETEMHLVYANRSEDDILLRDELDRWATEYPDRLKVWYVIDQVKRPEDGWKFSVGFVTEDILRAHVPEGGDDTLALACGPPPMIKFAISPNLEKMKYDMANSFISF.

The tract at residues 1–99 (SVEPRQPFGR…PRDEGTADAW (99 aa)) is disordered. The segment covering 13-23 (APATAPTARAP) has biased composition (low complexity). Acidic residues predominate over residues 54–68 (AEEDEEDDDEDDEGH). The span at 85 to 94 (PSTRDPRDEG) shows a compositional bias: basic and acidic residues. Mo-molybdopterin is bound at residue Cys186. Residues 535–610 (DKQFTMSEVR…LDTYRIGELI (76 aa)) enclose the Cytochrome b5 heme-binding domain. His570 and His593 together coordinate heme. One can recognise an FAD-binding FR-type domain in the interval 651 to 764 (REKVPCRLVD…KGPLGHVEYT (114 aa)). FAD contacts are provided by residues 703–706 (RAYT), 720–724 (LVKVY), Phe725, Phe732, 737–739 (LMT), Ser788, and Thr791.

It belongs to the nitrate reductase family. In terms of assembly, homodimer. It depends on FAD as a cofactor. Heme serves as cofactor. Requires Mo-molybdopterin as cofactor.

It carries out the reaction nitrite + NAD(+) + H2O = nitrate + NADH + H(+). Functionally, nitrate reductase is a key enzyme involved in the first step of nitrate assimilation in plants, fungi and bacteria. In Hordeum vulgare (Barley), this protein is Nitrate reductase [NADH].